We begin with the raw amino-acid sequence, 282 residues long: Phosphatidylserine decarboxylase proenzyme (282 aa).

Catalysis depends on charge relay system; for autoendoproteolytic cleavage activity residues aspartate 88, histidine 144, and serine 247. The Schiff-base intermediate with substrate; via pyruvic acid; for decarboxylase activity role is filled by serine 247. Position 247 is a pyruvic acid (Ser); by autocatalysis (serine 247).

Belongs to the phosphatidylserine decarboxylase family. PSD-B subfamily. Prokaryotic type I sub-subfamily. As to quaternary structure, heterodimer of a large membrane-associated beta subunit and a small pyruvoyl-containing alpha subunit. Pyruvate serves as cofactor. In terms of processing, is synthesized initially as an inactive proenzyme. Formation of the active enzyme involves a self-maturation process in which the active site pyruvoyl group is generated from an internal serine residue via an autocatalytic post-translational modification. Two non-identical subunits are generated from the proenzyme in this reaction, and the pyruvate is formed at the N-terminus of the alpha chain, which is derived from the carboxyl end of the proenzyme. The autoendoproteolytic cleavage occurs by a canonical serine protease mechanism, in which the side chain hydroxyl group of the serine supplies its oxygen atom to form the C-terminus of the beta chain, while the remainder of the serine residue undergoes an oxidative deamination to produce ammonia and the pyruvoyl prosthetic group on the alpha chain. During this reaction, the Ser that is part of the protease active site of the proenzyme becomes the pyruvoyl prosthetic group, which constitutes an essential element of the active site of the mature decarboxylase.

The protein resides in the cell membrane. It catalyses the reaction a 1,2-diacyl-sn-glycero-3-phospho-L-serine + H(+) = a 1,2-diacyl-sn-glycero-3-phosphoethanolamine + CO2. It functions in the pathway phospholipid metabolism; phosphatidylethanolamine biosynthesis; phosphatidylethanolamine from CDP-diacylglycerol: step 2/2. Catalyzes the formation of phosphatidylethanolamine (PtdEtn) from phosphatidylserine (PtdSer). The polypeptide is Phosphatidylserine decarboxylase proenzyme (Xanthomonas campestris pv. campestris (strain B100)).